Consider the following 224-residue polypeptide: Peroxiredoxin-6 (224 aa).

The Thioredoxin domain occupies 4–168 (LLLGDEAPNF…ILRVVDSLQL (165 aa)). Residues 30–39 (DSWGILFSHP) form a required and sufficient for targeting to lysosomes and lamellar bodies region. The active-site Cysteine sulfenic acid (-SOH) intermediate; for peroxidase activity is the cysteine 46. A Phosphotyrosine modification is found at tyrosine 88. Aspartate 139 serves as the catalytic For phospholipase activity. Phosphothreonine; by MAPK is present on threonine 176.

The protein belongs to the peroxiredoxin family. Prx6 subfamily. Homodimer. Interacts with GSTP1; mediates PRDX6 glutathionylation and regeneration. Irreversibly inactivated by overoxidation of Cys-46 to sulfinic acid (Cys-SO(2)H) and sulfonic acid (Cys-SO(3)H) forms upon oxidative stress. Post-translationally, phosphorylation at Thr-176 by MAP kinases increases the phospholipase activity of the enzyme. The phosphorylated form exhibits a greater lysophosphatidylcholine acyltransferase activity compared to the non-phosphorylated form.

It localises to the cytoplasm. It is found in the lysosome. The catalysed reaction is a hydroperoxide + 2 glutathione = an alcohol + glutathione disulfide + H2O. The enzyme catalyses a 1,2-diacyl-sn-glycero-3-phosphocholine + H2O = a 1-acyl-sn-glycero-3-phosphocholine + a fatty acid + H(+). It carries out the reaction a 1-acyl-sn-glycero-3-phosphocholine + an acyl-CoA = a 1,2-diacyl-sn-glycero-3-phosphocholine + CoA. It catalyses the reaction 1-hexadecanoyl-sn-glycero-3-phosphocholine + hexadecanoyl-CoA = 1,2-dihexadecanoyl-sn-glycero-3-phosphocholine + CoA. The catalysed reaction is 1,2-dihexadecanoyl-sn-glycero-3-phosphocholine + H2O = 1-hexadecanoyl-sn-glycero-3-phosphocholine + hexadecanoate + H(+). In terms of biological role, thiol-specific peroxidase that catalyzes the reduction of hydrogen peroxide and organic hydroperoxides to water and alcohols, respectively. Can reduce H(2)O(2) and short chain organic, fatty acid, and phospholipid hydroperoxides. Also has phospholipase activity, and can therefore either reduce the oxidized sn-2 fatty acyl group of phospholipids (peroxidase activity) or hydrolyze the sn-2 ester bond of phospholipids (phospholipase activity). These activities are dependent on binding to phospholipids at acidic pH and to oxidized phospholipds at cytosolic pH. Plays a role in cell protection against oxidative stress by detoxifying peroxides and in phospholipid homeostasis. Exhibits acyl-CoA-dependent lysophospholipid acyltransferase which mediates the conversion of lysophosphatidylcholine (1-acyl-sn-glycero-3-phosphocholine or LPC) into phosphatidylcholine (1,2-diacyl-sn-glycero-3-phosphocholine or PC). Shows a clear preference for LPC as the lysophospholipid and for palmitoyl CoA as the fatty acyl substrate. In Gallus gallus (Chicken), this protein is Peroxiredoxin-6 (PRDX6).